Consider the following 464-residue polypeptide: Argininosuccinate lyase (464 aa).

The protein belongs to the lyase 1 family. Argininosuccinate lyase subfamily.

It localises to the cytoplasm. The enzyme catalyses 2-(N(omega)-L-arginino)succinate = fumarate + L-arginine. It participates in amino-acid biosynthesis; L-arginine biosynthesis; L-arginine from L-ornithine and carbamoyl phosphate: step 3/3. The protein is Argininosuccinate lyase of Azotobacter vinelandii (strain DJ / ATCC BAA-1303).